Consider the following 222-residue polypeptide: Protein-L-isoaspartate O-methyltransferase (222 aa).

Ser-73 is a catalytic residue.

This sequence belongs to the methyltransferase superfamily. L-isoaspartyl/D-aspartyl protein methyltransferase family.

The protein localises to the cytoplasm. It catalyses the reaction [protein]-L-isoaspartate + S-adenosyl-L-methionine = [protein]-L-isoaspartate alpha-methyl ester + S-adenosyl-L-homocysteine. In terms of biological role, catalyzes the methyl esterification of L-isoaspartyl residues in peptides and proteins that result from spontaneous decomposition of normal L-aspartyl and L-asparaginyl residues. It plays a role in the repair and/or degradation of damaged proteins. This is Protein-L-isoaspartate O-methyltransferase from Chromobacterium violaceum (strain ATCC 12472 / DSM 30191 / JCM 1249 / CCUG 213 / NBRC 12614 / NCIMB 9131 / NCTC 9757 / MK).